A 347-amino-acid polypeptide reads, in one-letter code: Ataxin-7-like protein 3 (347 aa).

Residues 84–105 (CVCPNCSRSIAASRFAPHLEKC) form an SGF11-type zinc finger. The segment covering 116-125 (ANRRIANSNN) has biased composition (low complexity). The disordered stretch occupies residues 116–184 (ANRRIANSNN…GELSNSDPFK (69 aa)). Residues Ser129 and Ser131 each carry the phosphoserine modification. Residues 132 to 141 (DQEDNDDIND) are compositionally biased toward acidic residues. Positions 196–263 (LGPEELRSLL…SLDNDSFDMT (68 aa)) constitute an SCA7 domain. Positions 275 to 288 (DGSSDLSPSDSGSS) are enriched in low complexity. The disordered stretch occupies residues 275–347 (DGSSDLSPSD…PTPSIYDDIN (73 aa)). Residues Ser278, Ser281, and Ser326 each carry the phosphoserine modification.

Belongs to the SGF11 family. Component of some SAGA transcription coactivator-HAT complexes, at least composed of ATXN7, ATXN7L3, ENY2, GCN5L2, SUPT3H, TAF10, TRRAP and USP22. Within the SAGA complex, ENY2, ATXN7, ATXN7L3, and USP22 form an additional subcomplex of SAGA called the DUB module (deubiquitination module). Interacts directly with ENY2 and USP22.

The protein resides in the nucleus. Component of the transcription regulatory histone acetylation (HAT) complex SAGA, a multiprotein complex that activates transcription by remodeling chromatin and mediating histone acetylation and deubiquitination. Within the SAGA complex, participates in a subcomplex that specifically deubiquitinates both histones H2A and H2B. The SAGA complex is recruited to specific gene promoters by activators such as MYC, where it is required for transcription. Required for nuclear receptor-mediated transactivation. Within the complex, it is required to recruit USP22 and ENY2 into the SAGA complex. Regulates H2B monoubiquitination (H2Bub1) levels. Affects subcellular distribution of ENY2, USP22 and ATXN7L3B. This is Ataxin-7-like protein 3 from Homo sapiens (Human).